Here is a 314-residue protein sequence, read N- to C-terminus: MLHTRIRRATLGAVAALSLVPVMACGQESSADAAEPAGSAPSSSAAAHKPGEVEPYAAELKALEDEFDVRLGVYAVDTGSGREVAYRDGERFPYNSTFKALECGAVLDKHTDREMDRVVKYSEDDLVDNSPVTEKHVEDGMTLTALCDAAVRYSDNTAANLLFETVGGPKGLDKTLEGLGDHVTRMERVEPFLSRWEPGSKRDTSTPRAFAKDLRAYVLGDVLAEGDRKQLTTWLRNNTTGDGLIRAGVRQGWVVGDKTGTGSYYGARNDMAVVWRPDGRPLVLNVMVHGHTKDAELDSELIARATEVVADRLG.

Positions 1-26 (MLHTRIRRATLGAVAALSLVPVMACG) are cleaved as a signal peptide. Residues 32–47 (DAAEPAGSAPSSSAAA) show a composition bias toward low complexity. Residues 32-51 (DAAEPAGSAPSSSAAAHKPG) form a disordered region. Catalysis depends on Ser96, which acts as the Acyl-ester intermediate. A substrate-binding site is contributed by 258–260 (KTG).

The protein belongs to the class-A beta-lactamase family.

It carries out the reaction a beta-lactam + H2O = a substituted beta-amino acid. This chain is Beta-lactamase 2 (blaU), found in Streptomyces cacaoi.